A 362-amino-acid polypeptide reads, in one-letter code: Alternative oxidase, mitochondrial (362 aa).

The N-terminal 64 residues, 1-64, are a transit peptide targeting the mitochondrion; that stretch reads MNTPKVNILH…RNFSTTSVTR (64 aa). Residues 156–176 traverse the membrane as a helical segment; sequence LVRFIFLESIAGVPGMVAGML. Fe cation contacts are provided by E163, E202, and H205. Residues 222–242 form a helical membrane-spanning segment; that stretch reads LILGAQGVFFNAMFLSYLISP. E253, E310, and H313 together coordinate Fe cation.

It belongs to the alternative oxidase family. In terms of assembly, homodimer; disulfide-linked. Requires Fe cation as cofactor.

The protein resides in the mitochondrion inner membrane. Functionally, catalyzes cyanide-resistant oxygen consumption. May increase respiration when the cytochrome respiratory pathway is restricted, or in response to low temperatures. This is Alternative oxidase, mitochondrial (aod-1) from Neurospora crassa (strain ATCC 24698 / 74-OR23-1A / CBS 708.71 / DSM 1257 / FGSC 987).